The primary structure comprises 985 residues: Cation channel sperm-associated auxiliary subunit epsilon (985 aa).

An N-terminal signal peptide occupies residues 1–35; sequence MPSAGQRKPGSLLALQALQKWLLRGGVGAMLARQV. Topologically, residues 36 to 937 are extracellular; sequence VAALLLWLSC…ESLGMIPRSS (902 aa). 4 cysteine pairs are disulfide-bonded: Cys-87–Cys-101, Cys-130–Cys-235, Cys-275–Cys-365, and Cys-439–Cys-442. Residues Asn-91, Asn-143, and Asn-292 are each glycosylated (N-linked (GlcNAc...) asparagine). N-linked (GlcNAc...) asparagine glycans are attached at residues Asn-502, Asn-517, and Asn-565. 4 disulfide bridges follow: Cys-617-Cys-724, Cys-737-Cys-919, Cys-753-Cys-786, and Cys-838-Cys-869. Asn-749 is a glycosylation site (N-linked (GlcNAc...) asparagine). The N-linked (GlcNAc...) asparagine glycan is linked to Asn-830. Asn-888, Asn-915, and Asn-920 each carry an N-linked (GlcNAc...) asparagine glycan. The chain crosses the membrane as a helical span at residues 938 to 958; it reads VYLVAALIFVLMLTFISILVL. Topologically, residues 959-985 are cytoplasmic; sequence SYFWYLKIYRQFIIEPLHKRPAKQKKN.

The protein belongs to the CATSPERD family. Component of the CatSper complex or CatSpermasome composed of the core pore-forming members CATSPER1, CATSPER2, CATSPER3 and CATSPER4 as well as auxiliary members CATSPERB, CATSPERG2, CATSPERD, CATSPERE, CATSPERZ, C2CD6/CATSPERT, SLCO6C1, TMEM249, TMEM262 and EFCAB9. HSPA1 may be an additional auxiliary complex member. The core complex members CATSPER1, CATSPER2, CATSPER3 and CATSPER4 form a heterotetrameric channel. The auxiliary CATSPERB, CATSPERG2, CATSPERD and CATSPERE subunits form a pavilion-like structure over the pore which stabilizes the complex through interactions with CATSPER4, CATSPER3, CATSPER1 and CATSPER2 respectively. SLCO6C1 interacts with CATSPERE and TMEM262/CATSPERH interacts with CATSPERB, further stabilizing the complex. C2CD6/CATSPERT interacts at least with CATSPERD and is required for targeting the CatSper complex in the flagellar membrane. Testis-specific.

It is found in the cell projection. It localises to the cilium. The protein localises to the flagellum membrane. Functionally, auxiliary component of the CatSper complex, a complex involved in sperm cell hyperactivation. Sperm cell hyperactivation is needed for sperm motility which is essential late in the preparation of sperm for fertilization. The sequence is that of Cation channel sperm-associated auxiliary subunit epsilon from Mus musculus (Mouse).